Reading from the N-terminus, the 262-residue chain is Spindlin-Z (262 aa).

A disordered region spans residues 1-50 (MKTPFGKSPGQRSRADAGHAGVSASMMKKRTSHKKHRNNVGPSKPISQPR). Over residues 27-38 (MKKRTSHKKHRN) the composition is skewed to basic residues.

Belongs to the SPIN/STSY family. In terms of tissue distribution, expressed in several tissues including testis.

Its subcellular location is the nucleus. May play a role in mitosis. The polypeptide is Spindlin-Z (SPINZ) (Gallus gallus (Chicken)).